Here is a 149-residue protein sequence, read N- to C-terminus: Ribonuclease pancreatic (149 aa).

A signal peptide spans 1–25; it reads MGLEKSLILFPLFFLLLGWVQPSLG. K32 and R35 together coordinate substrate. Residue H37 is the Proton acceptor of the active site. Intrachain disulfides connect C51–C109, C65–C120, C83–C135, and C90–C97. Residues 66–70 and K91 each bind substrate; that span reads KPVNT. Catalysis depends on H144, which acts as the Proton donor.

Belongs to the pancreatic ribonuclease family. In terms of assembly, monomer. Interacts with and forms tight 1:1 complexes with RNH1. Dimerization of two such complexes may occur. Interaction with RNH1 inhibits this protein. As to expression, pancreas.

It localises to the secreted. It catalyses the reaction an [RNA] containing cytidine + H2O = an [RNA]-3'-cytidine-3'-phosphate + a 5'-hydroxy-ribonucleotide-3'-[RNA].. The enzyme catalyses an [RNA] containing uridine + H2O = an [RNA]-3'-uridine-3'-phosphate + a 5'-hydroxy-ribonucleotide-3'-[RNA].. Endonuclease that catalyzes the cleavage of RNA on the 3' side of pyrimidine nucleotides. Acts on single-stranded and double-stranded RNA. The sequence is that of Ribonuclease pancreatic (Rnase1) from Mus musculus (Mouse).